A 253-amino-acid polypeptide reads, in one-letter code: uncharacterized protein (253 aa).

Belongs to the DcsA family.

This is an uncharacterized protein from Bacillus subtilis (strain 168).